The sequence spans 122 residues: Small ribosomal subunit protein uS13 (122 aa).

The tract at residues 94 to 122 (LSLPVRGQRTKTNSRTRKGKRKTVAGKKK) is disordered. The segment covering 101–122 (QRTKTNSRTRKGKRKTVAGKKK) has biased composition (basic residues).

The protein belongs to the universal ribosomal protein uS13 family. Part of the 30S ribosomal subunit. Forms a loose heterodimer with protein S19. Forms two bridges to the 50S subunit in the 70S ribosome.

Functionally, located at the top of the head of the 30S subunit, it contacts several helices of the 16S rRNA. In the 70S ribosome it contacts the 23S rRNA (bridge B1a) and protein L5 of the 50S subunit (bridge B1b), connecting the 2 subunits; these bridges are implicated in subunit movement. Contacts the tRNAs in the A and P-sites. The chain is Small ribosomal subunit protein uS13 from Chlamydia trachomatis serovar A (strain ATCC VR-571B / DSM 19440 / HAR-13).